We begin with the raw amino-acid sequence, 371 residues long: uncharacterized protein (371 aa).

Positions 287–323 (EVVTALDRYRQHLRETRERLEEKQGKLLEELKGYESM) form a coiled coil.

This is an uncharacterized protein from Aspergillus fumigatus (strain ATCC MYA-4609 / CBS 101355 / FGSC A1100 / Af293) (Neosartorya fumigata).